The chain runs to 189 residues: Peptidyl-tRNA hydrolase (189 aa).

Tyr-15 is a binding site for tRNA. His-20 serves as the catalytic Proton acceptor. The tRNA site is built by Phe-66, Asn-68, and Asn-114.

Belongs to the PTH family. As to quaternary structure, monomer.

It localises to the cytoplasm. The enzyme catalyses an N-acyl-L-alpha-aminoacyl-tRNA + H2O = an N-acyl-L-amino acid + a tRNA + H(+). Its function is as follows. Hydrolyzes ribosome-free peptidyl-tRNAs (with 1 or more amino acids incorporated), which drop off the ribosome during protein synthesis, or as a result of ribosome stalling. In terms of biological role, catalyzes the release of premature peptidyl moieties from peptidyl-tRNA molecules trapped in stalled 50S ribosomal subunits, and thus maintains levels of free tRNAs and 50S ribosomes. In Streptococcus pneumoniae (strain P1031), this protein is Peptidyl-tRNA hydrolase.